The sequence spans 971 residues: Oncostatin-M-specific receptor subunit beta (971 aa).

An N-terminal signal peptide occupies residues 1–23 (MAFSVVLHPAFLLAVLSLRASRS). Over 24 to 737 (EVLEEPLPLT…VTTPDARSHM (714 aa)) the chain is Extracellular. N-linked (GlcNAc...) asparagine glycosylation is found at N74, N97, N130, N162, and N239. Cysteines 242 and 252 form a disulfide. N-linked (GlcNAc...) asparagine glycosylation is found at N271, N304, N323, and N377. Fibronectin type-III domains follow at residues 332–425 (APQD…TPET), 427–523 (PSQA…SNDS), 524–620 (GHEE…TQEL), and 622–733 (PLVN…TPDA). The short motif at 412-416 (WSDWT) is the WSXWS motif element. N491, N541, N577, N689, and N722 each carry an N-linked (GlcNAc...) asparagine glycan. Residues 738–758 (LLQIILPMTLCVLLSIIVCYW) traverse the membrane as a helical segment. Residues 759–971 (KSQWVKEKCY…STVLLGQGEQ (213 aa)) are Cytoplasmic-facing. The Box 1 motif signature appears at 767–775 (CYPDIPNPY). Positions 949 to 971 (LASPSLKEDNSLTSTVLLGQGEQ) are disordered. A compositionally biased stretch (polar residues) spans 959–971 (SLTSTVLLGQGEQ).

This sequence belongs to the type I cytokine receptor family. Type 2 subfamily. In terms of assembly, heterodimer composed of OSMR and IL6ST (type II OSM receptor). Heterodimer with IL31RA to form the IL31 receptor. Widely expressed. Expressed at highest levels in the lung, heart, thymus and spleen. Expressed in dorsal root ganglia.

Its subcellular location is the membrane. Associates with IL31RA to form the IL31 receptor. Binds IL31 to activate STAT3 and possibly STAT1 and STAT5. Capable of transducing OSM-specific signaling events. The chain is Oncostatin-M-specific receptor subunit beta (Osmr) from Mus musculus (Mouse).